The sequence spans 901 residues: MKGSDIPHVEANYVDLGRAVGTVCDNAHRELANVLETLPSTPADVAKKQALLEVLVRARQEFVRTYVLTKWAKVSEDVTKCIDVVAWLHGQRNCFDNLNHMLVGLGRDLGAAKSRNPDLQTAVQVLTRGAPTTFGDHDMAPKKKLKPQTILRTLRDLNVLLSVQLAQSTDIPPQFKRYKIANGRATFTVANAFEVDVGIADDTLDGPFFFIDFRLLFGDRKELPPQTRGMLERAGNSALAQRGLSALYSLLMKFALNYKLALIYKQIMEMSKGLWSGTLRHRFYQERSLIALEYWVSQHATHRPKSTLEIGIFSESDLRIAVRWSRQGEEVPYSEHQIQFGGESTDVASLLEYVTTLHLKHIISCVYTKLRALLGDSSDMVSLCSDGHKLRFRLTSLRSTVFTVDRLTGKTVLENATSLILSAERSLNELVSRPDQAASVLFKLRLLSLENDIRTRACATGWTAQNVTLSTDEMKTHFGFTTRYVLFLRQPQWPSNWFVVVTVPEDGSLPLWWIAKLRVRKDTAWTAECMDRIHVNQDLDSLYDYELLTQMVTFASHRIVLHPILDELRAAKTPFRLLRSAQHTPVVAIDNSALVTSWSHSSLLILPEMSAGSMDMKLHVQGRAKTVMNLPSNDSIDFDASTGIYKLTLEGANTPGFSLVNKLKERLQQIEQIVSYIELIKDLGLELVTASMQQIKFKLGDAQVSVDIPSELNPNITLHLSPTDPHNIIHSYLQETLNSSGLRPVVWLLQTTRNLYTTLQKLQKTRGGDPEQLEKIISNLSISDLETRQKQLQPRLSIVPRSAAFVRLVYPGKMNIDVTLVRHSATLDGVKFFIKESPLELPPPPQPGQPPVAVPRKLQVWNGSVTPDVDVGKAVYLNDGIACEGDNVGKVLEWVDKQIGK.

The protein belongs to the Mediator complex subunit 14 family. Component of the Mediator complex.

The protein resides in the nucleus. Its function is as follows. Component of the Mediator complex, a coactivator involved in the regulated transcription of nearly all RNA polymerase II-dependent genes. Mediator functions as a bridge to convey information from gene-specific regulatory proteins to the basal RNA polymerase II transcription machinery. Mediator is recruited to promoters by direct interactions with regulatory proteins and serves as a scaffold for the assembly of a functional preinitiation complex with RNA polymerase II and the general transcription factors. The protein is Mediator of RNA polymerase II transcription subunit 14 (RGR1) of Yarrowia lipolytica (strain CLIB 122 / E 150) (Yeast).